The following is a 289-amino-acid chain: Homoserine kinase (289 aa).

79–89 (PLARGLGSSSS) is an ATP binding site.

The protein belongs to the GHMP kinase family. Homoserine kinase subfamily.

Its subcellular location is the cytoplasm. It carries out the reaction L-homoserine + ATP = O-phospho-L-homoserine + ADP + H(+). Its pathway is amino-acid biosynthesis; L-threonine biosynthesis; L-threonine from L-aspartate: step 4/5. Catalyzes the ATP-dependent phosphorylation of L-homoserine to L-homoserine phosphate. In Streptococcus pneumoniae (strain Taiwan19F-14), this protein is Homoserine kinase.